Consider the following 346-residue polypeptide: MSMVSEFLKQAYFIDNQEQDYVKTVKSSKGGPGSAVSPYPSFDASSDVAALHKAITVKGVDEATIIDILTKRNNAQRQQIKAAYLQEKGKPLDEALKKALTGHLEEVVLALLKTPAQLDADELRAAMKGLGTDEDTLIEILVSRKNREIKEINRVYRDELKRDLAKDITSDTSGDFQKALLSLAKGDRCEDLSVNDDLADSDARALYEAGERRKGTDVNVFITILTTRSYSHLRRVFQKYTKYSQHDMNKALDLELKGDIENCLTAIVKCATSTPAFFAEKLHLAMKGAGTRHKALIRIMVSRSEIDMNDIKVYYQKMYGISLCQAILDETKGDYEKILVALCGGQ.

Position 5 is a phosphoserine; by TRPM7 (S5). An Isoglutamyl lysine isopeptide (Gln-Lys) (interchain with K-?) cross-link involves residue Q19. Y21 is subject to Phosphotyrosine; by EGFR. Phosphoserine; by PKC is present on S27. S34 and S37 each carry phosphoserine. Annexin repeat units lie at residues 42–113 (FDAS…ALLK), 114–185 (TPAQ…SLAK), 197–269 (DLAD…AIVK), and 273–344 (STPA…ALCG). K58 carries the post-translational modification N6-acetyllysine. The Ca(2+) site is built by G59, V60, E62, K97, L100, E105, M127, G129, G131, T132, and E134. T136 carries the phosphothreonine modification. Positions 171, 210, and 213 each coordinate Ca(2+). K214 participates in a covalent cross-link: Glycyl lysine isopeptide (Lys-Gly) (interchain with G-Cter in SUMO1); alternate. K214 is covalently cross-linked (Glycyl lysine isopeptide (Lys-Gly) (interchain with G-Cter in SUMO2); alternate). G215 serves as a coordination point for Ca(2+). K239 carries the N6-acetyllysine modification. Ca(2+)-binding residues include D253, E255, and L256. Residue K257 forms a Glycyl lysine isopeptide (Lys-Gly) (interchain with G-Cter in SUMO1) linkage. The Ca(2+) site is built by E261, M286, G288, and G290. K312 carries the post-translational modification N6-acetyllysine. C324 and C343 are disulfide-bonded. Residues L328, E330, and T331 each coordinate Ca(2+). Residue K332 forms a Glycyl lysine isopeptide (Lys-Gly) (interchain with G-Cter in SUMO1) linkage. A Ca(2+)-binding site is contributed by E336.

It belongs to the annexin family. As to quaternary structure, homodimer; non-covalently linked. Homodimer; linked by transglutamylation. Homodimers linked by transglutamylation are observed in placenta, but not in other tissues. Interacts with S100A11. Heterotetramer, formed by two molecules each of S100A11 and ANXA1. Interacts with DYSF. Interacts with EGFR. Post-translationally, phosphorylated by protein kinase C, EGFR and TRPM7. Phosphorylated in response to EGF treatment. Sumoylated. In terms of processing, proteolytically cleaved by cathepsin CTSG to release the active N-terminal peptide Ac2-26.

The protein resides in the nucleus. Its subcellular location is the cytoplasm. The protein localises to the cell projection. It localises to the cilium. It is found in the basolateral cell membrane. The protein resides in the lateral cell membrane. Its subcellular location is the cell membrane. The protein localises to the apical cell membrane. It localises to the membrane. It is found in the endosome membrane. The protein resides in the secreted. Its subcellular location is the extracellular space. The protein localises to the early endosome. It localises to the cytoplasmic vesicle membrane. It is found in the extracellular exosome. The protein resides in the cytoplasmic vesicle. Its subcellular location is the secretory vesicle lumen. The protein localises to the phagocytic cup. Plays important roles in the innate immune response as effector of glucocorticoid-mediated responses and regulator of the inflammatory process. Has anti-inflammatory activity. Plays a role in glucocorticoid-mediated down-regulation of the early phase of the inflammatory response. Contributes to the adaptive immune response by enhancing signaling cascades that are triggered by T-cell activation, regulates differentiation and proliferation of activated T-cells. Promotes the differentiation of T-cells into Th1 cells and negatively regulates differentiation into Th2 cells. Has no effect on unstimulated T-cells. Negatively regulates hormone exocytosis via activation of the formyl peptide receptors and reorganization of the actin cytoskeleton. Has high affinity for Ca(2+) and can bind up to eight Ca(2+) ions. Displays Ca(2+)-dependent binding to phospholipid membranes. Plays a role in the formation of phagocytic cups and phagosomes. Plays a role in phagocytosis by mediating the Ca(2+)-dependent interaction between phagosomes and the actin cytoskeleton. Its function is as follows. Functions at least in part by activating the formyl peptide receptors and downstream signaling cascades. Promotes chemotaxis of granulocytes and monocytes via activation of the formyl peptide receptors. Promotes rearrangement of the actin cytoskeleton, cell polarization and cell migration. Promotes resolution of inflammation and wound healing. Acts via neutrophil N-formyl peptide receptors to enhance the release of CXCL2. The protein is Annexin A1 (ANXA1) of Cavia cutleri (Guinea pig).